Here is a 99-residue protein sequence, read N- to C-terminus: C-C motif chemokine 8 (99 aa).

Residues 1-23 (MKVSAGILCLLLVAATFGTQVLA) form the signal peptide. Gln-24 is subject to Pyrrolidone carboxylic acid. 2 disulfide bridges follow: Cys-34/Cys-59 and Cys-35/Cys-75.

The protein belongs to the intercrine beta (chemokine CC) family. Monomer or homodimer; in equilibrium.

It localises to the secreted. In terms of biological role, chemotactic factor that attracts monocytes. This protein can bind heparin. The chain is C-C motif chemokine 8 (CCL8) from Bos taurus (Bovine).